We begin with the raw amino-acid sequence, 246 residues long: Ribonuclease 3 (246 aa).

One can recognise an RNase III domain in the interval 10-135 (LENFLTLNNI…FVAAIYLDLG (126 aa)). Glutamate 50 lines the Mg(2+) pocket. Aspartate 54 is an active-site residue. Positions 121 and 124 each coordinate Mg(2+). Glutamate 124 is an active-site residue. A DRBM domain is found at 161–230 (DPKSSFQEYI…ATRALETLKA (70 aa)).

Belongs to the ribonuclease III family. As to quaternary structure, homodimer. The cofactor is Mg(2+).

It is found in the cytoplasm. The catalysed reaction is Endonucleolytic cleavage to 5'-phosphomonoester.. Functionally, digests double-stranded RNA. Involved in the processing of primary rRNA transcript to yield the immediate precursors to the large and small rRNAs (23S and 16S). Processes some mRNAs, and tRNAs when they are encoded in the rRNA operon. Processes pre-crRNA and tracrRNA of type II CRISPR loci if present in the organism. The sequence is that of Ribonuclease 3 from Mycoplasma mobile (strain ATCC 43663 / 163K / NCTC 11711) (Mesomycoplasma mobile).